A 235-amino-acid polypeptide reads, in one-letter code: Putative N-acetylmannosamine-6-phosphate 2-epimerase (235 aa).

This sequence belongs to the NanE family.

It catalyses the reaction an N-acyl-D-glucosamine 6-phosphate = an N-acyl-D-mannosamine 6-phosphate. The protein operates within amino-sugar metabolism; N-acetylneuraminate degradation; D-fructose 6-phosphate from N-acetylneuraminate: step 3/5. Converts N-acetylmannosamine-6-phosphate (ManNAc-6-P) to N-acetylglucosamine-6-phosphate (GlcNAc-6-P). In Edwardsiella ictaluri (strain 93-146), this protein is Putative N-acetylmannosamine-6-phosphate 2-epimerase.